The sequence spans 417 residues: Methyltransferase/ribosomally synthesized cyclic peptide dendrothelin A precursor dbihMA (417 aa).

The tract at residues methionine 1 to lysine 251 is methyltransferase domain. Residues arginine 72, tyrosine 76, and tyrosine 98 contribute to the active site. Tyrosine 98, histidine 100, valine 103, alanine 130, glutamine 172, alanine 213, serine 244, and threonine 245 together coordinate S-adenosyl-L-methionine. The interval alanine 252 to methionine 378 is clasp domain. Positions proline 379–proline 399 are precursor leader. N-methylvaline occurs at positions 401 and 403. An N-methylthreonine modification is found at threonine 404. The residue at position 405 (glycine 405) is an N-methylglycine. The residue at position 406 (isoleucine 406) is an N-methylisoleucine. Position 407 is an N-methylvaline (valine 407). Position 408 is an N-methylglycine (glycine 408). Position 410 is an N-methylisoleucine (isoleucine 410). Residue glycine 411 is modified to N-methylglycine. Valine 413 is modified (N-methylvaline).

This sequence in the N-terminal section; belongs to the precorrin methyltransferase family. As to quaternary structure, homodimer. In terms of processing, dbiMA automethylates at Val-401, Val-403, Thr-404, Gly-405, Ile-406, Val-407, Gly-408, Ile-410, Gly-411 and Val-413 before being processed by the prolyloligopeptidase dbiP which likely forms a peptidyl ester upon removal of the follower propeptide, which then undergoes macrocyclization with the N-terminus of the modified core peptide. Peptide backbone alpha-N-methylations change the physicochemical properties of amide bonds to provide structural constraints and other favorable characteristics including biological membrane permeability to peptides.

It functions in the pathway mycotoxin biosynthesis. Its function is as follows. Fusion protein of the methyltransferase dbiM and the dendrothelin core peptide; part of the gene cluster that mediates the biosynthesis of dendrothelin A, a highly methylated cyclic dodecapeptide showing slight nematodicidal activity. Dendrothelin A derives from the C-terminus of the dbiMA protein, and it is the dbiMA protein that methylates its own C-terminus using S-adenosyl methionine (SAM). The C-terminus is subsequently cleaved off and macrocyclized by the prolyloligopeptidase dbiP to give the final product. In Dendrothele bispora (strain CBS 962.96), this protein is Methyltransferase/ribosomally synthesized cyclic peptide dendrothelin A precursor dbihMA.